The sequence spans 235 residues: Protein fmp52-1, mitochondrial (235 aa).

The transit peptide at 1 to 36 (MANTALIGCTGMVGSFILNNLLAHPSVARVDTISRR) directs the protein to the mitochondrion.

Belongs to the FMP52 family.

Its subcellular location is the mitochondrion outer membrane. The protein is Protein fmp52-1, mitochondrial (fmp521) of Aspergillus oryzae (strain ATCC 42149 / RIB 40) (Yellow koji mold).